The following is a 702-amino-acid chain: Vertnin (702 aa).

Positions 562–625 (VPTLGKGGQE…QGQPHSGPLL (64 aa)) are disordered. The segment covering 570–582 (QEAEEKQEKEAGR) has biased composition (basic and acidic residues).

It belongs to the vertnin family.

It is found in the nucleus. Functionally, acts as a transcription factor that regulates development of thoracic vertebrae. This chain is Vertnin, found in Homo sapiens (Human).